Here is a 129-residue protein sequence, read N- to C-terminus: Large ribosomal subunit protein uL22 (129 aa).

The protein belongs to the universal ribosomal protein uL22 family. In terms of assembly, part of the 50S ribosomal subunit.

In terms of biological role, this protein binds specifically to 23S rRNA; its binding is stimulated by other ribosomal proteins, e.g. L4, L17, and L20. It is important during the early stages of 50S assembly. It makes multiple contacts with different domains of the 23S rRNA in the assembled 50S subunit and ribosome. Its function is as follows. The globular domain of the protein is located near the polypeptide exit tunnel on the outside of the subunit, while an extended beta-hairpin is found that lines the wall of the exit tunnel in the center of the 70S ribosome. The protein is Large ribosomal subunit protein uL22 of Beijerinckia indica subsp. indica (strain ATCC 9039 / DSM 1715 / NCIMB 8712).